A 169-amino-acid chain; its full sequence is UPF0316 protein Dde_2502 (169 aa).

3 consecutive transmembrane segments (helical) span residues 1 to 21 (MITA…LCDV), 38 to 58 (LAFS…SRVI), and 68 to 88 (LAFA…EGVF).

The protein belongs to the UPF0316 family.

It localises to the cell membrane. The protein is UPF0316 protein Dde_2502 of Oleidesulfovibrio alaskensis (strain ATCC BAA-1058 / DSM 17464 / G20) (Desulfovibrio alaskensis).